Here is a 201-residue protein sequence, read N- to C-terminus: Protein GrpE (201 aa).

Residues 1–11 show a composition bias toward polar residues; the sequence is MTDSTNNQGTS. The segment at 1 to 40 is disordered; that stretch reads MTDSTNNQGTSGRPDDDHTTEEVASVFNDPGAQAPAGEPD.

Belongs to the GrpE family. In terms of assembly, homodimer.

It is found in the cytoplasm. Participates actively in the response to hyperosmotic and heat shock by preventing the aggregation of stress-denatured proteins, in association with DnaK and GrpE. It is the nucleotide exchange factor for DnaK and may function as a thermosensor. Unfolded proteins bind initially to DnaJ; upon interaction with the DnaJ-bound protein, DnaK hydrolyzes its bound ATP, resulting in the formation of a stable complex. GrpE releases ADP from DnaK; ATP binding to DnaK triggers the release of the substrate protein, thus completing the reaction cycle. Several rounds of ATP-dependent interactions between DnaJ, DnaK and GrpE are required for fully efficient folding. This Beijerinckia indica subsp. indica (strain ATCC 9039 / DSM 1715 / NCIMB 8712) protein is Protein GrpE.